Here is a 257-residue protein sequence, read N- to C-terminus: Phycoerythrobilin:ferredoxin oxidoreductase (257 aa).

It belongs to the HY2 family.

It catalyses the reaction (3Z)-phycoerythrobilin + oxidized 2[4Fe-4S]-[ferredoxin] = 15,16-dihydrobiliverdin + reduced 2[4Fe-4S]-[ferredoxin] + 2 H(+). Functionally, catalyzes the two-electron reduction of the C2 and C3(1) diene system of 15,16-dihydrobiliverdin. The sequence is that of Phycoerythrobilin:ferredoxin oxidoreductase (pebB) from Prochlorococcus marinus (strain SARG / CCMP1375 / SS120).